Reading from the N-terminus, the 132-residue chain is Small ribosomal subunit protein uS8c (132 aa).

This sequence belongs to the universal ribosomal protein uS8 family. In terms of assembly, part of the 30S ribosomal subunit.

It localises to the plastid. It is found in the chloroplast. One of the primary rRNA binding proteins, it binds directly to 16S rRNA central domain where it helps coordinate assembly of the platform of the 30S subunit. This is Small ribosomal subunit protein uS8c (rps8) from Acorus calamus (Sweet flag).